The chain runs to 339 residues: DNA-directed RNA polymerase subunit alpha (339 aa).

An alpha N-terminal domain (alpha-NTD) region spans residues 1 to 233 (MVREKVRIST…DLFIPFLHAE (233 aa)). An alpha C-terminal domain (alpha-CTD) region spans residues 267-339 (IALKSIFIDQ…FTINLPKNKF (73 aa)).

Belongs to the RNA polymerase alpha chain family. In terms of assembly, in plastids the minimal PEP RNA polymerase catalytic core is composed of four subunits: alpha, beta, beta', and beta''. When a (nuclear-encoded) sigma factor is associated with the core the holoenzyme is formed, which can initiate transcription.

It is found in the plastid. It localises to the chloroplast. The enzyme catalyses RNA(n) + a ribonucleoside 5'-triphosphate = RNA(n+1) + diphosphate. Its function is as follows. DNA-dependent RNA polymerase catalyzes the transcription of DNA into RNA using the four ribonucleoside triphosphates as substrates. This is DNA-directed RNA polymerase subunit alpha from Populus alba (White poplar).